A 623-amino-acid polypeptide reads, in one-letter code: Cilia- and flagella-associated protein 52 (623 aa).

WD repeat units follow at residues 65–109 (GHGN…LMAR), 112–153 (LHKG…AICG), 159–198 (LNVG…RKIW), 291–330 (QLQG…ETLI), 333–372 (CHFE…ELLR), 375–414 (VPNM…LMYV), 418–457 (AHRI…QKLE), 462–501 (EHKS…RNQM), 503–544 (LANT…RELD), 546–585 (SLSG…VTHV), and 588–623 (GHSG…PFPS).

This sequence belongs to the CFAP52 family. In terms of assembly, microtubule inner protein component of sperm flagellar doublet microtubules. Interacts with BRCA2. Interacts with the CCT chaperonin complex. Interacts with HSP70. Interacts with AK8. Interacts with CFAP45. Interacts with DNAI1. Interacts with IQDC. In terms of tissue distribution, expressed in trachea multiciliated cells.

Its subcellular location is the cytoplasm. It is found in the cytoskeleton. The protein resides in the cilium axoneme. The protein localises to the flagellum axoneme. Microtubule inner protein (MIP) part of the dynein-decorated doublet microtubules (DMTs) in cilia axoneme. Important for proper ciliary and flagellar beating. May act in cooperation with CFAP45 and axonemal dynein subunit DNAH11. May play a role in cell growth and/or survival. The polypeptide is Cilia- and flagella-associated protein 52 (CFAP52) (Bos taurus (Bovine)).